The primary structure comprises 47 residues: Small ribosomal subunit protein uS14 (47 aa).

Positions 12, 15, 30, and 33 each coordinate Zn(2+).

This sequence belongs to the universal ribosomal protein uS14 family. Zinc-binding uS14 subfamily. In terms of assembly, part of the 30S ribosomal subunit. Requires Zn(2+) as cofactor.

Its function is as follows. Binds 16S rRNA, required for the assembly of 30S particles. The sequence is that of Small ribosomal subunit protein uS14 from Methanosphaera stadtmanae (strain ATCC 43021 / DSM 3091 / JCM 11832 / MCB-3).